We begin with the raw amino-acid sequence, 483 residues long: Ero1-like protein (483 aa).

An N-terminal signal peptide occupies residues 1–29 (MTTRTVQRNLWASAAVVLVLLLLWTDTTG). 6 disulfides stabilise this stretch: cysteine 44/cysteine 57, cysteine 46/cysteine 55, cysteine 94/cysteine 402, cysteine 103/cysteine 108, cysteine 227/cysteine 251, and cysteine 405/cysteine 408. The FAD site is built by arginine 206, threonine 208, and tryptophan 219. An N-linked (GlcNAc...) asparagine glycan is attached at asparagine 232. FAD-binding residues include serine 262, histidine 265, and arginine 301. The N-linked (GlcNAc...) asparagine glycan is linked to asparagine 395.

The protein belongs to the EROs family. In terms of assembly, may function both as a monomer and a homodimer. FAD serves as cofactor.

It is found in the endoplasmic reticulum membrane. Functionally, oxidoreductase involved in disulfide bond formation in the endoplasmic reticulum. Efficiently reoxidizes pdi-1, the enzyme catalyzing protein disulfide formation, in order to allow pdi-1 to sustain additional rounds of disulfide formation. Following pdi reoxidation, passes its electrons to molecular oxygen via FAD, leading to the production of reactive oxygen species (ROS) in the cell. The chain is Ero1-like protein (Ero1L) from Drosophila melanogaster (Fruit fly).